The following is a 432-amino-acid chain: Mannose-6-phosphate isomerase 1 (432 aa).

M1 is subject to N-acetylmethionine. Positions 124, 126, 151, and 288 each coordinate Zn(2+). R307 is a catalytic residue.

This sequence belongs to the mannose-6-phosphate isomerase type 1 family. It depends on Zn(2+) as a cofactor. As to expression, constitutively expressed in both vegetative and reproductive organs under normal growth conditions (at protein level).

The catalysed reaction is D-mannose 6-phosphate = D-fructose 6-phosphate. It functions in the pathway nucleotide-sugar biosynthesis; GDP-alpha-D-mannose biosynthesis; alpha-D-mannose 1-phosphate from D-fructose 6-phosphate: step 1/2. Inhibited by EDTA, Zn(2+), Cd(2+), Co(2+), p-chloromercuribenzoate and L-ascorbic acid (AsA). Functionally, phosphomannose isomerase involved in the synthesis of the GDP-mannose and dolichol-phosphate-mannose required for a number of critical mannosyl transfer reactions. Involved in the ascorbic acid (AsA) biosynthesis. Required during the endosperm development. In Arabidopsis thaliana (Mouse-ear cress), this protein is Mannose-6-phosphate isomerase 1 (PMI1).